Reading from the N-terminus, the 319-residue chain is Acetyl-coenzyme A carboxylase carboxyl transferase subunit alpha (319 aa).

One can recognise a CoA carboxyltransferase C-terminal domain in the interval 35-296; sequence DLDKEIEQLE…KATLLRQLED (262 aa).

This sequence belongs to the AccA family. As to quaternary structure, acetyl-CoA carboxylase is a heterohexamer composed of biotin carboxyl carrier protein (AccB), biotin carboxylase (AccC) and two subunits each of ACCase subunit alpha (AccA) and ACCase subunit beta (AccD).

It localises to the cytoplasm. The enzyme catalyses N(6)-carboxybiotinyl-L-lysyl-[protein] + acetyl-CoA = N(6)-biotinyl-L-lysyl-[protein] + malonyl-CoA. Its pathway is lipid metabolism; malonyl-CoA biosynthesis; malonyl-CoA from acetyl-CoA: step 1/1. Its function is as follows. Component of the acetyl coenzyme A carboxylase (ACC) complex. First, biotin carboxylase catalyzes the carboxylation of biotin on its carrier protein (BCCP) and then the CO(2) group is transferred by the carboxyltransferase to acetyl-CoA to form malonyl-CoA. In Vibrio parahaemolyticus serotype O3:K6 (strain RIMD 2210633), this protein is Acetyl-coenzyme A carboxylase carboxyl transferase subunit alpha.